Reading from the N-terminus, the 262-residue chain is 5'-nucleotidase SurE (262 aa).

A divalent metal cation contacts are provided by Asp8, Asp9, Ser40, and Asn92.

Belongs to the SurE nucleotidase family. It depends on a divalent metal cation as a cofactor.

Its subcellular location is the cytoplasm. The enzyme catalyses a ribonucleoside 5'-phosphate + H2O = a ribonucleoside + phosphate. Its function is as follows. Nucleotidase that shows phosphatase activity on nucleoside 5'-monophosphates. In Xylella fastidiosa (strain M23), this protein is 5'-nucleotidase SurE.